A 146-amino-acid chain; its full sequence is D-aminoacyl-tRNA deacylase (146 aa).

The Gly-cisPro motif, important for rejection of L-amino acids motif lies at 138 to 139 (GP).

It belongs to the DTD family. Homodimer.

Its subcellular location is the cytoplasm. It catalyses the reaction glycyl-tRNA(Ala) + H2O = tRNA(Ala) + glycine + H(+). It carries out the reaction a D-aminoacyl-tRNA + H2O = a tRNA + a D-alpha-amino acid + H(+). Functionally, an aminoacyl-tRNA editing enzyme that deacylates mischarged D-aminoacyl-tRNAs. Also deacylates mischarged glycyl-tRNA(Ala), protecting cells against glycine mischarging by AlaRS. Acts via tRNA-based rather than protein-based catalysis; rejects L-amino acids rather than detecting D-amino acids in the active site. By recycling D-aminoacyl-tRNA to D-amino acids and free tRNA molecules, this enzyme counteracts the toxicity associated with the formation of D-aminoacyl-tRNA entities in vivo and helps enforce protein L-homochirality. This Tolumonas auensis (strain DSM 9187 / NBRC 110442 / TA 4) protein is D-aminoacyl-tRNA deacylase.